The chain runs to 302 residues: NAD kinase 1 (302 aa).

Catalysis depends on Asp-67, which acts as the Proton acceptor. NAD(+) is bound by residues Asp-67–Gly-68, Arg-72, Asn-148–Asp-149, Lys-178, and Asp-180.

It belongs to the NAD kinase family. The cofactor is a divalent metal cation.

The protein localises to the cytoplasm. It catalyses the reaction NAD(+) + ATP = ADP + NADP(+) + H(+). Functionally, involved in the regulation of the intracellular balance of NAD and NADP, and is a key enzyme in the biosynthesis of NADP. Catalyzes specifically the phosphorylation on 2'-hydroxyl of the adenosine moiety of NAD to yield NADP. The chain is NAD kinase 1 from Prochlorococcus marinus (strain NATL2A).